Reading from the N-terminus, the 254-residue chain is Protein EFFECTOR OF TRANSCRIPTION 3 (254 aa).

A GIY-YIG domain is found at 103-152 (RCTGLYELGVGVIGQDQGQNFDPDNNVLGVYVGQCVDVKSRLQDYGRRGG).

The protein resides in the cytoplasm. The sequence is that of Protein EFFECTOR OF TRANSCRIPTION 3 from Arabidopsis thaliana (Mouse-ear cress).